The primary structure comprises 98 residues: Small ribosomal subunit protein uS19 (98 aa).

A disordered region spans residues 77-98; the sequence is TRTFRGHAGGKAEKGGSAPRKK.

The protein belongs to the universal ribosomal protein uS19 family.

Functionally, protein S19 forms a complex with S13 that binds strongly to the 16S ribosomal RNA. The chain is Small ribosomal subunit protein uS19 from Chlorobium limicola (strain DSM 245 / NBRC 103803 / 6330).